The chain runs to 444 residues: Phosphoglucosamine mutase (444 aa).

The active-site Phosphoserine intermediate is Ser102. 4 residues coordinate Mg(2+): Ser102, Asp241, Asp243, and Asp245. A Phosphoserine modification is found at Ser102.

Belongs to the phosphohexose mutase family. It depends on Mg(2+) as a cofactor. Activated by phosphorylation.

The catalysed reaction is alpha-D-glucosamine 1-phosphate = D-glucosamine 6-phosphate. Functionally, catalyzes the conversion of glucosamine-6-phosphate to glucosamine-1-phosphate. This chain is Phosphoglucosamine mutase, found in Leptothrix cholodnii (strain ATCC 51168 / LMG 8142 / SP-6) (Leptothrix discophora (strain SP-6)).